A 284-amino-acid chain; its full sequence is RNase adapter protein RapZ (284 aa).

8 to 15 (GRSGSGKS) lines the ATP pocket. Position 56–59 (56–59 (DVRN)) interacts with GTP. The RNA-binding stretch occupies residues 266-284 (RSRGKNVQSRHRTLEKRKS).

Belongs to the RapZ-like family. RapZ subfamily. Homotrimer.

Its function is as follows. Modulates the synthesis of GlmS, by affecting the processing and stability of the regulatory small RNA GlmZ. When glucosamine-6-phosphate (GlcN6P) concentrations are high in the cell, RapZ binds GlmZ and targets it to cleavage by RNase E. Consequently, GlmZ is inactivated and unable to activate GlmS synthesis. Under low GlcN6P concentrations, RapZ is sequestered and inactivated by an other regulatory small RNA, GlmY, preventing GlmZ degradation and leading to synthesis of GlmS. This is RNase adapter protein RapZ from Klebsiella oxytoca.